The primary structure comprises 220 residues: NAD(P)H-quinone oxidoreductase subunit M, chloroplastic (220 aa).

A chloroplast-targeting transit peptide spans 1–37 (MATTASPFLSPAKLSLERRLPRATWTARRSVRFPPVR). Residues 20–91 (LPRATWTARR…PVQPLAESKN (72 aa)) are disordered. Low complexity predominate over residues 34 to 44 (PPVRAQDQQQQ).

Belongs to the NDH complex subunit M family. Part of the chloroplast NDH complex, composed of a mixture of chloroplast and nucleus encoded subunits. Component of the NDH subcomplex A, at least composed of ndhH, ndhI, ndhJ, ndhK, ndhL, ndhM, ndhN and ndhO.

The protein resides in the plastid. The protein localises to the chloroplast thylakoid membrane. It catalyses the reaction a plastoquinone + NADH + (n+1) H(+)(in) = a plastoquinol + NAD(+) + n H(+)(out). It carries out the reaction a plastoquinone + NADPH + (n+1) H(+)(in) = a plastoquinol + NADP(+) + n H(+)(out). Its function is as follows. NDH shuttles electrons from NAD(P)H:plastoquinone, via FMN and iron-sulfur (Fe-S) centers, to quinones in the photosynthetic chain and possibly in a chloroplast respiratory chain. The immediate electron acceptor for the enzyme in this species is believed to be plastoquinone. Couples the redox reaction to proton translocation, and thus conserves the redox energy in a proton gradient. The chain is NAD(P)H-quinone oxidoreductase subunit M, chloroplastic from Oryza sativa subsp. indica (Rice).